A 638-amino-acid polypeptide reads, in one-letter code: Leucine-rich repeat-containing protein 63 (638 aa).

Disordered regions lie at residues 220–241 (VPST…PSAA) and 306–325 (TTAA…TVQR). 6 LRR repeats span residues 389–412 (AFQL…ILYL), 413–435 (QNLQ…IHLL), 437–458 (YLRI…LFCL), 460–481 (YLEE…IQKL), 482–504 (RSLE…ILKL), and 532–556 (LTQI…VRKS).

The sequence is that of Leucine-rich repeat-containing protein 63 from Mus musculus (Mouse).